We begin with the raw amino-acid sequence, 469 residues long: Adenosylhomocysteinase (469 aa).

Substrate contacts are provided by Thr63, Asp139, and Glu164. 165-167 (TTT) contacts NAD(+). 2 residues coordinate substrate: Lys194 and Asp198. NAD(+) is bound by residues Asn199, 228–233 (GYGDVG), Glu251, Asn300, 321–323 (IGH), and Asn375.

It belongs to the adenosylhomocysteinase family. The cofactor is NAD(+).

It localises to the cytoplasm. The enzyme catalyses S-adenosyl-L-homocysteine + H2O = L-homocysteine + adenosine. It functions in the pathway amino-acid biosynthesis; L-homocysteine biosynthesis; L-homocysteine from S-adenosyl-L-homocysteine: step 1/1. Its function is as follows. May play a key role in the regulation of the intracellular concentration of adenosylhomocysteine. In Pseudomonas aeruginosa (strain UCBPP-PA14), this protein is Adenosylhomocysteinase.